A 302-amino-acid polypeptide reads, in one-letter code: Ectoine dioxygenase (302 aa).

Gln-128 provides a ligand contact to L-ectoine. Lys-134 contacts 2-oxoglutarate. Residues His-145, Asp-147, and His-246 each contribute to the Fe cation site.

This sequence belongs to the PhyH family. EctD subfamily. In terms of assembly, homodimer. The cofactor is Fe(2+).

It carries out the reaction L-ectoine + 2-oxoglutarate + O2 = 5-hydroxyectoine + succinate + CO2. Involved in the biosynthesis of 5-hydroxyectoine, called compatible solute, which helps organisms to survive extreme osmotic stress by acting as a highly soluble organic osmolyte. Catalyzes the 2-oxoglutarate-dependent selective hydroxylation of L-ectoine to yield (4S,5S)-5-hydroxyectoine. The chain is Ectoine dioxygenase from Stutzerimonas stutzeri (strain A1501) (Pseudomonas stutzeri).